The primary structure comprises 90 residues: UPF0237 protein NMA1909 (90 aa).

Residues Val-5–Ile-83 form the ACT domain.

The protein belongs to the UPF0237 family.

This is UPF0237 protein NMA1909 from Neisseria meningitidis serogroup A / serotype 4A (strain DSM 15465 / Z2491).